A 142-amino-acid polypeptide reads, in one-letter code: Large ribosomal subunit protein uL13 (142 aa).

This sequence belongs to the universal ribosomal protein uL13 family. Part of the 50S ribosomal subunit.

In terms of biological role, this protein is one of the early assembly proteins of the 50S ribosomal subunit, although it is not seen to bind rRNA by itself. It is important during the early stages of 50S assembly. In Ralstonia nicotianae (strain ATCC BAA-1114 / GMI1000) (Ralstonia solanacearum), this protein is Large ribosomal subunit protein uL13.